We begin with the raw amino-acid sequence, 463 residues long: Bifunctional protein GlmU (463 aa).

Positions 1–228 (MEQALSIVVL…PAEVQGVNDR (228 aa)) are pyrophosphorylase. UDP-N-acetyl-alpha-D-glucosamine is bound by residues 10–13 (LAAG), K24, Q75, 80–81 (GT), 102–104 (YGD), G138, E153, N168, and N226. D104 is a binding site for Mg(2+). N226 contributes to the Mg(2+) binding site. A linker region spans residues 229 to 249 (VQLAAAERVWQRRQAEDWMRA). The segment at 250–463 (GVTILDPDRF…RPDRGEGSDA (214 aa)) is N-acetyltransferase. UDP-N-acetyl-alpha-D-glucosamine is bound by residues R332 and K350. Catalysis depends on H362, which acts as the Proton acceptor. UDP-N-acetyl-alpha-D-glucosamine is bound by residues Y365 and N376. Acetyl-CoA-binding positions include A379, 385–386 (NY), S404, A422, and R439. Residues 437 to 463 (VARSAQRSIHGWRRPGQRPDRGEGSDA) form a disordered region. The segment covering 453–463 (QRPDRGEGSDA) has biased composition (basic and acidic residues).

It in the N-terminal section; belongs to the N-acetylglucosamine-1-phosphate uridyltransferase family. The protein in the C-terminal section; belongs to the transferase hexapeptide repeat family. In terms of assembly, homotrimer. Requires Mg(2+) as cofactor.

The protein resides in the cytoplasm. The catalysed reaction is alpha-D-glucosamine 1-phosphate + acetyl-CoA = N-acetyl-alpha-D-glucosamine 1-phosphate + CoA + H(+). It carries out the reaction N-acetyl-alpha-D-glucosamine 1-phosphate + UTP + H(+) = UDP-N-acetyl-alpha-D-glucosamine + diphosphate. Its pathway is nucleotide-sugar biosynthesis; UDP-N-acetyl-alpha-D-glucosamine biosynthesis; N-acetyl-alpha-D-glucosamine 1-phosphate from alpha-D-glucosamine 6-phosphate (route II): step 2/2. The protein operates within nucleotide-sugar biosynthesis; UDP-N-acetyl-alpha-D-glucosamine biosynthesis; UDP-N-acetyl-alpha-D-glucosamine from N-acetyl-alpha-D-glucosamine 1-phosphate: step 1/1. It functions in the pathway bacterial outer membrane biogenesis; LPS lipid A biosynthesis. Its function is as follows. Catalyzes the last two sequential reactions in the de novo biosynthetic pathway for UDP-N-acetylglucosamine (UDP-GlcNAc). The C-terminal domain catalyzes the transfer of acetyl group from acetyl coenzyme A to glucosamine-1-phosphate (GlcN-1-P) to produce N-acetylglucosamine-1-phosphate (GlcNAc-1-P), which is converted into UDP-GlcNAc by the transfer of uridine 5-monophosphate (from uridine 5-triphosphate), a reaction catalyzed by the N-terminal domain. The sequence is that of Bifunctional protein GlmU from Alkalilimnicola ehrlichii (strain ATCC BAA-1101 / DSM 17681 / MLHE-1).